The following is a 243-amino-acid chain: 1-(5-phosphoribosyl)-5-[(5-phosphoribosylamino)methylideneamino] imidazole-4-carboxamide isomerase (243 aa).

Asp-8 (proton acceptor) is an active-site residue. Catalysis depends on Asp-129, which acts as the Proton donor.

This sequence belongs to the HisA/HisF family.

Its subcellular location is the cytoplasm. It carries out the reaction 1-(5-phospho-beta-D-ribosyl)-5-[(5-phospho-beta-D-ribosylamino)methylideneamino]imidazole-4-carboxamide = 5-[(5-phospho-1-deoxy-D-ribulos-1-ylimino)methylamino]-1-(5-phospho-beta-D-ribosyl)imidazole-4-carboxamide. It functions in the pathway amino-acid biosynthesis; L-histidine biosynthesis; L-histidine from 5-phospho-alpha-D-ribose 1-diphosphate: step 4/9. This is 1-(5-phosphoribosyl)-5-[(5-phosphoribosylamino)methylideneamino] imidazole-4-carboxamide isomerase from Citrifermentans bemidjiense (strain ATCC BAA-1014 / DSM 16622 / JCM 12645 / Bem) (Geobacter bemidjiensis).